The sequence spans 551 residues: ATP synthase subunit alpha, mitochondrial (551 aa).

210–217 provides a ligand contact to ATP; it reads GDRQTGKT.

The protein belongs to the ATPase alpha/beta chains family. In terms of assembly, F-type ATPases have 2 components, CF(1) - the catalytic core - and CF(0) - the membrane proton channel. CF(1) has five subunits: alpha(3), beta(3), gamma(1), delta(1), epsilon(1). CF(0) has three main subunits: a, b and c.

It localises to the mitochondrion. It is found in the mitochondrion inner membrane. Mitochondrial membrane ATP synthase (F(1)F(0) ATP synthase or Complex V) produces ATP from ADP in the presence of a proton gradient across the membrane which is generated by electron transport complexes of the respiratory chain. F-type ATPases consist of two structural domains, F(1) - containing the extramembraneous catalytic core, and F(0) - containing the membrane proton channel, linked together by a central stalk and a peripheral stalk. During catalysis, ATP synthesis in the catalytic domain of F(1) is coupled via a rotary mechanism of the central stalk subunits to proton translocation. Subunits alpha and beta form the catalytic core in F(1). Rotation of the central stalk against the surrounding alpha(3)beta(3) subunits leads to hydrolysis of ATP in three separate catalytic sites on the beta subunits. Subunit alpha does not bear the catalytic high-affinity ATP-binding sites. The chain is ATP synthase subunit alpha, mitochondrial (atp-1) from Neurospora crassa (strain ATCC 24698 / 74-OR23-1A / CBS 708.71 / DSM 1257 / FGSC 987).